A 517-amino-acid chain; its full sequence is Maturase K (517 aa).

This sequence belongs to the intron maturase 2 family. MatK subfamily.

It localises to the plastid. Its subcellular location is the chloroplast. Its function is as follows. Usually encoded in the trnK tRNA gene intron. Probably assists in splicing its own and other chloroplast group II introns. In Phalaenopsis japonica (Orchid), this protein is Maturase K.